Reading from the N-terminus, the 417-residue chain is 4-hydroxy-3-methylbut-2-en-1-yl diphosphate synthase (flavodoxin) (417 aa).

[4Fe-4S] cluster is bound by residues cysteine 303, cysteine 306, cysteine 349, and glutamate 356.

Belongs to the IspG family. [4Fe-4S] cluster is required as a cofactor.

The enzyme catalyses (2E)-4-hydroxy-3-methylbut-2-enyl diphosphate + oxidized [flavodoxin] + H2O + 2 H(+) = 2-C-methyl-D-erythritol 2,4-cyclic diphosphate + reduced [flavodoxin]. The protein operates within isoprenoid biosynthesis; isopentenyl diphosphate biosynthesis via DXP pathway; isopentenyl diphosphate from 1-deoxy-D-xylulose 5-phosphate: step 5/6. In terms of biological role, converts 2C-methyl-D-erythritol 2,4-cyclodiphosphate (ME-2,4cPP) into 1-hydroxy-2-methyl-2-(E)-butenyl 4-diphosphate. The chain is 4-hydroxy-3-methylbut-2-en-1-yl diphosphate synthase (flavodoxin) from Mesorhizobium japonicum (strain LMG 29417 / CECT 9101 / MAFF 303099) (Mesorhizobium loti (strain MAFF 303099)).